We begin with the raw amino-acid sequence, 540 residues long: Protein dml-1 (540 aa).

The segment at 517–540 (NELAEMADEYHEGWSSGSDDGDDD) is disordered.

The protein belongs to the misato family.

The protein resides in the mitochondrion. Involved in the partitioning of the mitochondrial organelle and mitochondrial DNA (mtDNA) inheritance. This Neurospora crassa (strain ATCC 24698 / 74-OR23-1A / CBS 708.71 / DSM 1257 / FGSC 987) protein is Protein dml-1 (dml-1).